Here is a 436-residue protein sequence, read N- to C-terminus: 3-ketoacyl-CoA thiolase (436 aa).

Residue Cys-99 is the Acyl-thioester intermediate of the active site. Active-site proton acceptor residues include His-392 and Cys-422.

This sequence belongs to the thiolase-like superfamily. Thiolase family. As to quaternary structure, heterotetramer of two alpha chains (FadJ) and two beta chains (FadI).

It localises to the cytoplasm. It carries out the reaction an acyl-CoA + acetyl-CoA = a 3-oxoacyl-CoA + CoA. The protein operates within lipid metabolism; fatty acid beta-oxidation. In terms of biological role, catalyzes the final step of fatty acid oxidation in which acetyl-CoA is released and the CoA ester of a fatty acid two carbons shorter is formed. The protein is 3-ketoacyl-CoA thiolase of Shigella boydii serotype 4 (strain Sb227).